Consider the following 636-residue polypeptide: Carbon monoxide dehydrogenase 1 (636 aa).

The [4Fe-4S] cluster site is built by Cys-38, Cys-46, Cys-47, Cys-50, Cys-55, and Cys-69. Positions 262, 297, 335, 448, 478, and 528 each coordinate [Ni-4Fe-5S] cluster.

It belongs to the Ni-containing carbon monoxide dehydrogenase family. In terms of assembly, homodimer. The cofactor is [4Fe-4S] cluster. It depends on [Ni-4Fe-5S] cluster as a cofactor.

The protein localises to the cytoplasm. It is found in the cell membrane. The enzyme catalyses CO + 2 oxidized [2Fe-2S]-[ferredoxin] + H2O = 2 reduced [2Fe-2S]-[ferredoxin] + CO2 + 2 H(+). Its activity is regulated as follows. Inactivated by O(2). CODH oxidizes carbon monoxide coupled, via CooF, to the reduction of a hydrogen cation by a hydrogenase (possibly CooH). The polypeptide is Carbon monoxide dehydrogenase 1 (cooS1) (Carboxydothermus hydrogenoformans (strain ATCC BAA-161 / DSM 6008 / Z-2901)).